The sequence spans 263 residues: Bidirectional sugar transporter SWEET3 (263 aa).

Topologically, residues 1–7 are extracellular; that stretch reads MGDKLRL. A helical membrane pass occupies residues 8 to 28; sequence SIGILGNGASLLLYTAPIVTF. Positions 9-97 constitute a MtN3/slv 1 domain; the sequence is IGILGNGASL…FIYFYYASPK (89 aa). Residues 29–42 are Cytoplasmic-facing; the sequence is SRVFKKKSTEEFSC. A helical transmembrane segment spans residues 43–63; that stretch reads FPYVMTLFNCLIYTWYGLPIV. Over 64-71 the chain is Extracellular; the sequence is SHLWENLP. The helical transmembrane segment at 72–92 threads the bilayer; that stretch reads LVTINGVGILLESIFIFIYFY. Over 93–103 the chain is Cytoplasmic; it reads YASPKEKIKVG. The helical transmembrane segment at 104-124 threads the bilayer; the sequence is VTFVPVIVGFGLTTAISALVF. The Extracellular portion of the chain corresponds to 125–132; that stretch reads DDHRHRKS. A helical membrane pass occupies residues 133-153; sequence FVGSVGLVASISMYGSPLVVM. The MtN3/slv 2 domain occupies 133–217; that stretch reads FVGSVGLVAS…ILYFKYKNKK (85 aa). The Cytoplasmic portion of the chain corresponds to 154–165; the sequence is KKVIETRSVEYM. Residues 166–186 traverse the membrane as a helical segment; the sequence is PFYLSFFSFLASSLWLAYGLL. Topologically, residues 187 to 190 are extracellular; it reads SHDL. Residues 191 to 211 form a helical membrane-spanning segment; it reads FLASPNMVATPLGILQLILYF. At 212–263 the chain is on the cytoplasmic side; the sequence is KYKNKKDLAPTTMVITKRNDHDDKNKATLEFVVDVDRNSDTNEKNSNNASSI.

This sequence belongs to the SWEET sugar transporter family. In terms of assembly, forms heterooligomers with SWEET11, SWEET13 and SWEET17.

It localises to the cell membrane. Functionally, mediates both low-affinity uptake and efflux of sugar across the plasma membrane. The polypeptide is Bidirectional sugar transporter SWEET3 (Arabidopsis thaliana (Mouse-ear cress)).